We begin with the raw amino-acid sequence, 72 residues long: DNA-directed RNA polymerase subunit omega (72 aa).

The protein belongs to the RNA polymerase subunit omega family. As to quaternary structure, the RNAP catalytic core consists of 2 alpha, 1 beta, 1 beta' and 1 omega subunit. When a sigma factor is associated with the core the holoenzyme is formed, which can initiate transcription.

It catalyses the reaction RNA(n) + a ribonucleoside 5'-triphosphate = RNA(n+1) + diphosphate. Its function is as follows. Promotes RNA polymerase assembly. Latches the N- and C-terminal regions of the beta' subunit thereby facilitating its interaction with the beta and alpha subunits. This is DNA-directed RNA polymerase subunit omega from Clostridium kluyveri (strain NBRC 12016).